A 54-amino-acid polypeptide reads, in one-letter code: Califin-C (54 aa).

A disulfide bridge links Cys-25 with Cys-53. Position 36 is a leucine amide (Leu-36).

Belongs to the molluscan ELH family. As to quaternary structure, this protein consists of a large 36-residue subunit, bound by a single disulfide-bond to a small 18-residue subunit.

The protein localises to the secreted. Its function is as follows. Injected in sexually mature animals califin C excites LB and LC cells of the abdominal ganglion and cause egg-laying. The chain is Califin-C from Aplysia californica (California sea hare).